The sequence spans 599 residues: Flap endonuclease GEN-like 1 (599 aa).

Positions 1-96 (MGVGGNFWDL…ISRFFRSSGI (96 aa)) are N-domain. The segment at 2–95 (GVGGNFWDLL…RISRFFRSSG (94 aa)) is XPG-N domain. 7 residues coordinate Mg(2+): aspartate 31, aspartate 75, glutamate 140, glutamate 142, aspartate 161, aspartate 163, and aspartate 213. An XPG-I domain region spans residues 128–213 (ELLGIPVLKA…IAISLLVGND (86 aa)). The I-domain stretch occupies residues 128–217 (ELLGIPVLKA…LLVGNDYDSG (90 aa)). The interval 213 to 407 (DYDSGGVLGI…LLPMLSTIYL (195 aa)) is 5'-3' exonuclease domain. Disordered stretches follow at residues 522–545 (RESK…MGVQ) and 559–599 (AAGQ…LLFG). Polar residues-rich tracts occupy residues 563–572 (SIETGGSSKA) and 580–590 (ATSTSSSNLTK).

This sequence belongs to the XPG/RAD2 endonuclease family. GEN subfamily. Mg(2+) is required as a cofactor.

The protein localises to the nucleus. In terms of biological role, endonuclease which cleaves flap structures at the junction between single-stranded DNA and double-stranded DNA with a specific cleavage site in the 5' overhang strand exactly one nucleotide 3' of the branch point. Structure- and sequence-specific nuclease that resolves holliday junctions (HJs) by symmetrically oriented incisions in two opposing strands near the junction point, thus leading to ligatable products; HJs are physical links between homologous DNA molecules that arise as central intermediary structures during homologous recombination and repair in meiotic and somatic cells. Structure-specific nuclease with 5'-flap endonuclease activity, preferentially cleaving static flaps 5' overhang strand exactly one nucleotide in the 3' direction of the branch point. Also able to cleave double-stranded flap strand 1 exactly at the branch point. In Arabidopsis thaliana (Mouse-ear cress), this protein is Flap endonuclease GEN-like 1.